Here is a 23-residue protein sequence, read N- to C-terminus: Caerin-4.1 (23 aa).

As to expression, expressed by the skin parotoid and/or rostral glands.

The protein resides in the secreted. In terms of biological role, antibacterial peptide, that adopts an alpha helical conformation which can disrupt bacterial membranes. Each caerin displays a different antimicrobial specificity. This is Caerin-4.1 from Ranoidea caerulea (Green tree frog).